The following is a 623-amino-acid chain: Leucine aminopeptidase 2 (623 aa).

Residues 136–138 and 261–266 each bind a peptide; these read QCE and PYGGME. His290 contacts Zn(2+). The active-site Proton acceptor is Glu291. Zn(2+) is bound by residues His294 and Glu313. Tyr391 acts as the Proton donor in catalysis.

It belongs to the peptidase M1 family. The cofactor is Zn(2+).

The protein resides in the cytoplasm. It is found in the nucleus. The enzyme catalyses an epoxide + H2O = an ethanediol. In terms of biological role, aminopeptidase that preferentially cleaves di- and tripeptides. Also has low epoxide hydrolase activity (in vitro). Can hydrolyze the epoxide leukotriene LTA(4) but it forms preferentially 5,6-dihydroxy-7,9,11,14-eicosatetraenoic acid rather than the cytokine leukotriene B(4) as the product compared to the homologous mammalian enzyme (in vitro). The sequence is that of Leucine aminopeptidase 2 (LKH1) from Candida albicans (strain SC5314 / ATCC MYA-2876) (Yeast).